The following is an 837-amino-acid chain: Anaphase-promoting complex subunit 2 (837 aa).

A phosphoserine mark is found at Ser-233, Ser-329, Ser-485, Ser-549, and Ser-712. The interval 478 to 508 is disordered; the sequence is CLETGQDSEDDSGEPEDWVPDPVDADPVKSS. Positions 483-496 are enriched in acidic residues; sequence QDSEDDSGEPEDWV. Position 825 is a phosphotyrosine (Tyr-825).

The protein belongs to the cullin family. The mammalian APC/C is composed at least of 14 distinct subunits ANAPC1, ANAPC2, CDC27/APC3, ANAPC4, ANAPC5, CDC16/APC6, ANAPC7, CDC23/APC8, ANAPC10, ANAPC11, CDC26/APC12, ANAPC13, ANAPC15 and ANAPC16 that assemble into a complex of at least 19 chains with a combined molecular mass of around 1.2 MDa; APC/C interacts with FZR1 and FBXO5. In the context of the APC/C complex, directly interacts with UBE2C and UBE2S. Interacts (via cullin domain) with ANAPC11 and with UBCH10. Interacts with NEUROD2. Interacts with FBXO43; the interaction is direct.

It participates in protein modification; protein ubiquitination. Functionally, together with the RING-H2 protein ANAPC11, constitutes the catalytic component of the anaphase promoting complex/cyclosome (APC/C), a cell cycle-regulated E3 ubiquitin ligase that controls progression through mitosis and the G1 phase of the cell cycle. The APC/C complex acts by mediating ubiquitination and subsequent degradation of target proteins: it mainly mediates the formation of 'Lys-11'-linked polyubiquitin chains and, to a lower extent, the formation of 'Lys-48'- and 'Lys-63'-linked polyubiquitin chains. The APC/C complex catalyzes assembly of branched 'Lys-11'-/'Lys-48'-linked branched ubiquitin chains on target proteins. The CDC20-APC/C complex positively regulates the formation of synaptic vesicle clustering at active zone to the presynaptic membrane in postmitotic neurons. CDC20-APC/C-induced degradation of NEUROD2 drives presynaptic differentiation. This chain is Anaphase-promoting complex subunit 2 (Anapc2), found in Mus musculus (Mouse).